The sequence spans 342 residues: UDP-N-acetylenolpyruvoylglucosamine reductase (342 aa).

An FAD-binding PCMH-type domain is found at 13 to 183 (IDHNAQHIVC…VAVGLRLPKE (171 aa)). Arginine 159 is an active-site residue. Residue tyrosine 190 coordinates substrate. Catalysis depends on serine 229, which acts as the Proton donor. The active site involves glutamate 325.

Belongs to the MurB family. In terms of assembly, monomer. The cofactor is FAD.

It localises to the cytoplasm. It carries out the reaction UDP-N-acetyl-alpha-D-muramate + NADP(+) = UDP-N-acetyl-3-O-(1-carboxyvinyl)-alpha-D-glucosamine + NADPH + H(+). It functions in the pathway cell wall biogenesis; peptidoglycan biosynthesis. Functionally, cell wall formation. The protein is UDP-N-acetylenolpyruvoylglucosamine reductase of Escherichia coli O157:H7.